A 1381-amino-acid chain; its full sequence is Hepatocyte growth factor receptor (1381 aa).

Residues 1–24 (MKAPAVLAPGILVLLFTLVQRSNG) form the signal peptide. The Extracellular segment spans residues 25 to 934 (ECKEALTKSE…VQPDQNFTGL (910 aa)). A Sema domain is found at 27 to 515 (KEALTKSEMN…TGKKITKIPL (489 aa)). Residue asparagine 45 is glycosylated (N-linked (GlcNAc...) asparagine). 4 disulfides stabilise this stretch: cysteine 95–cysteine 101, cysteine 98–cysteine 160, cysteine 133–cysteine 141, and cysteine 172–cysteine 175. The N-linked (GlcNAc...) asparagine glycan is linked to asparagine 106. N-linked (GlcNAc...) asparagine glycosylation is present at asparagine 149. Asparagine 202 carries an N-linked (GlcNAc...) asparagine glycan. 2 cysteine pairs are disulfide-bonded: cysteine 298–cysteine 363 and cysteine 385–cysteine 397. Residue asparagine 399 is glycosylated (N-linked (GlcNAc...) asparagine). Disulfide bonds link cysteine 520-cysteine 538, cysteine 526-cysteine 561, cysteine 529-cysteine 545, and cysteine 541-cysteine 551. 3 consecutive IPT/TIG domains span residues 563–655 (PAIY…FSYV), 657–739 (PIIT…FSYL), and 742–836 (PIVY…LIYV). An O-linked (Man) threonine glycan is attached at threonine 582. N-linked (GlcNAc...) asparagine glycans are attached at residues asparagine 607 and asparagine 635. 2 O-linked (Man) threonine glycosylation sites follow: threonine 676 and threonine 761. N-linked (GlcNAc...) asparagine glycans are attached at residues asparagine 785, asparagine 879, and asparagine 930. Residues 935 to 955 (IAGVVSISIALLLLLAFFLWL) traverse the membrane as a helical segment. At 956-1381 (KKRKQIKDLG…QDNADGEVDT (426 aa)) the chain is on the cytoplasmic side. Phosphoserine is present on serine 966. Position 977 is a phosphothreonine (threonine 977). A phosphoserine mark is found at serine 990, serine 997, and serine 1000. At tyrosine 1003 the chain carries Phosphotyrosine. Residues 1078-1345 (VHFNEVIGRG…RISAIFSTFI (268 aa)) enclose the Protein kinase domain. ATP is bound by residues 1084-1092 (IGRGHFGCV) and lysine 1110. Catalysis depends on aspartate 1204, which acts as the Proton acceptor. The segment at 1212 to 1381 (LDEKFTVKVA…QDNADGEVDT (170 aa)) is interaction with RANBP9. Residue tyrosine 1230 is modified to Phosphotyrosine. Phosphotyrosine; by autocatalysis is present on residues tyrosine 1234 and tyrosine 1235. A Phosphothreonine modification is found at threonine 1289. Residues 1320–1359 (WHPKAEMRPSFSELVSRISAIFSTFIGEHYVHVNATYVNV) are interaction with MUC20. Tyrosine 1349 and tyrosine 1356 each carry phosphotyrosine; by autocatalysis. At tyrosine 1365 the chain carries Phosphotyrosine.

Belongs to the protein kinase superfamily. Tyr protein kinase family. In terms of assembly, heterodimer made of an alpha chain (50 kDa) and a beta chain (145 kDa) which are disulfide linked. Binds PLXNB1. Interacts when phosphorylated with downstream effectors including STAT3, PIK3R1, SRC, PCLG1, GRB2 and GAB1. Interacts with SPSB1, SPSB2 and SPSB4. Interacts with INPP5D/SHIP1. When phosphorylated at Tyr-1356, interacts with INPPL1/SHIP2. Interacts with RANBP9 and RANBP10, as well as SPSB1, SPSB2, SPSB3 and SPSB4. SPSB1 binding occurs in the presence and in the absence of HGF, however HGF treatment has a positive effect on this interaction. Interacts with MUC20; prevents interaction with GRB2 and suppresses hepatocyte growth factor-induced cell proliferation. Interacts with GRB10. Interacts with PTPN1 and PTPN2. Interacts with HSP90AA1 and HSP90AB1; the interaction suppresses MET kinase activity. Interacts with tensin TNS3. Interacts (when phosphorylated) with tensin TNS4 (via SH2 domain); the interaction increases MET protein stability by inhibiting MET endocytosis and subsequent lysosomal degradation. Autophosphorylated in response to ligand binding on Tyr-1234 and Tyr-1235 in the kinase domain leading to further phosphorylation of Tyr-1349 and Tyr-1356 in the C-terminal multifunctional docking site. Dephosphorylated by PTPRJ at Tyr-1349 and Tyr-1365. Dephosphorylated by PTPN1 and PTPN2. In terms of processing, ubiquitinated. Ubiquitination by CBL regulates the receptor stability and activity through proteasomal degradation. Post-translationally, O-mannosylation of IPT/TIG domains by TMEM260 is required for protein maturation. O-mannosylated residues are composed of single mannose glycans that are not elongated or modified.

The protein resides in the membrane. The catalysed reaction is L-tyrosyl-[protein] + ATP = O-phospho-L-tyrosyl-[protein] + ADP + H(+). Its activity is regulated as follows. In its inactive state, the C-terminal tail interacts with the catalytic domain and inhibits the kinase activity. Upon ligand binding, the C-terminal tail is displaced and becomes phosphorylated, thus increasing the kinase activity. In terms of biological role, receptor tyrosine kinase that transduces signals from the extracellular matrix into the cytoplasm by binding to hepatocyte growth factor/HGF ligand. Regulates many physiological processes including proliferation, scattering, morphogenesis and survival. Ligand binding at the cell surface induces autophosphorylation of MET on its intracellular domain that provides docking sites for downstream signaling molecules. Following activation by ligand, interacts with the PI3-kinase subunit PIK3R1, PLCG1, SRC, GRB2, STAT3 or the adapter GAB1. Recruitment of these downstream effectors by MET leads to the activation of several signaling cascades including the RAS-ERK, PI3 kinase-AKT, or PLCgamma-PKC. The RAS-ERK activation is associated with the morphogenetic effects while PI3K/AKT coordinates prosurvival effects. During embryonic development, MET signaling plays a role in gastrulation, development and migration of muscles and neuronal precursors, angiogenesis and kidney formation. In adults, participates in wound healing as well as organ regeneration and tissue remodeling. Also promotes differentiation and proliferation of hematopoietic cells. The chain is Hepatocyte growth factor receptor (MET) from Plecturocebus moloch (Dusky titi monkey).